The primary structure comprises 601 residues: uncharacterized protein (601 aa).

The segment covering 24–35 has biased composition (basic residues); the sequence is RKSNVVLKKNKG. Disordered stretches follow at residues 24 to 106 and 171 to 219; these read RKSN…LKLD and YGND…PREE. Residues 54-81 are compositionally biased toward polar residues; it reads SQFSSRDNFRTTQTQASSSSEPSDNTNR. The span at 92–106 shows a compositional bias: basic and acidic residues; sequence TPKKEESNAEKLKLD. A phosphoserine mark is found at serine 236 and serine 238. Residues 260–283 are disordered; it reads RKRKVLSSSSEDDESSSPEDLLKP.

The protein localises to the nucleus. This is an uncharacterized protein from Schizosaccharomyces pombe (strain 972 / ATCC 24843) (Fission yeast).